The primary structure comprises 73 residues: Translation initiation factor IF-1 (73 aa).

One can recognise an S1-like domain in the interval 1–73; the sequence is MPKKDGAIEI…TRGRIVYRYK (73 aa).

Belongs to the IF-1 family. As to quaternary structure, component of the 30S ribosomal translation pre-initiation complex which assembles on the 30S ribosome in the order IF-2 and IF-3, IF-1 and N-formylmethionyl-tRNA(fMet); mRNA recruitment can occur at any time during PIC assembly.

It is found in the cytoplasm. In terms of biological role, one of the essential components for the initiation of protein synthesis. Stabilizes the binding of IF-2 and IF-3 on the 30S subunit to which N-formylmethionyl-tRNA(fMet) subsequently binds. Helps modulate mRNA selection, yielding the 30S pre-initiation complex (PIC). Upon addition of the 50S ribosomal subunit IF-1, IF-2 and IF-3 are released leaving the mature 70S translation initiation complex. The chain is Translation initiation factor IF-1 from Salinispora arenicola (strain CNS-205).